Here is a 345-residue protein sequence, read N- to C-terminus: Biotin synthase (345 aa).

The region spanning 38 to 256 is the Radical SAM core domain; it reads RQVQVSTLLS…IAVARIMMPS (219 aa). Positions 53, 57, and 60 each coordinate [4Fe-4S] cluster. The [2Fe-2S] cluster site is built by cysteine 97, cysteine 128, cysteine 188, and arginine 260.

The protein belongs to the radical SAM superfamily. Biotin synthase family. As to quaternary structure, homodimer. It depends on [4Fe-4S] cluster as a cofactor. Requires [2Fe-2S] cluster as cofactor.

It carries out the reaction (4R,5S)-dethiobiotin + (sulfur carrier)-SH + 2 reduced [2Fe-2S]-[ferredoxin] + 2 S-adenosyl-L-methionine = (sulfur carrier)-H + biotin + 2 5'-deoxyadenosine + 2 L-methionine + 2 oxidized [2Fe-2S]-[ferredoxin]. It participates in cofactor biosynthesis; biotin biosynthesis; biotin from 7,8-diaminononanoate: step 2/2. Its function is as follows. Catalyzes the conversion of dethiobiotin (DTB) to biotin by the insertion of a sulfur atom into dethiobiotin via a radical-based mechanism. The sequence is that of Biotin synthase from Yersinia pseudotuberculosis serotype O:1b (strain IP 31758).